A 547-amino-acid chain; its full sequence is Inositol-tetrakisphosphate 1-kinase 6 (547 aa).

K263 contacts 1D-myo-inositol 1,3,4-trisphosphate. ATP is bound by residues R317 and K370. The ATP-grasp domain occupies 327 to 539; that stretch reads LEGLSAEGRP…FWDAIKQSYE (213 aa). The 1D-myo-inositol 1,3,4-trisphosphate site is built by H381 and K415. Residues 404–415, S430, and S450 contribute to the ATP site; that span reads QEYIDHGSKIFK. 3 residues coordinate Mg(2+): D497, D511, and N513. 2 residues coordinate 1D-myo-inositol 1,3,4-trisphosphate: N513 and S517.

Belongs to the ITPK1 family. Monomer. Requires Mg(2+) as cofactor.

The catalysed reaction is 1D-myo-inositol 3,4,5,6-tetrakisphosphate + ATP = 1D-myo-inositol 1,3,4,5,6-pentakisphosphate + ADP + H(+). It catalyses the reaction 1D-myo-inositol 1,3,4-trisphosphate + ATP = 1D-myo-inositol 1,3,4,5-tetrakisphosphate + ADP + H(+). It carries out the reaction 1D-myo-inositol 1,3,4-trisphosphate + ATP = 1D-myo-inositol 1,3,4,6-tetrakisphosphate + ADP + H(+). Functionally, kinase that can phosphorylate various inositol polyphosphate such as Ins(3,4,5,6)P4 or Ins(1,3,4)P3 and participates in phytic acid biosynthesis in developing seeds. Phytic acid is the primary storage form of phosphorus in cereal grains and other plant seeds. The protein is Inositol-tetrakisphosphate 1-kinase 6 of Oryza sativa subsp. indica (Rice).